The chain runs to 544 residues: MTKFVFVTGGVVSSIGKGIVAASLGRLLKSRNYTVSILKLDPYINVDPGTMSPYQHGEVFVTDDGAETDLDLGHYERFTDTNMSKLNNVTTGAIYQAVIHKERRGDYQGSTVQVIPHVTQEIKERIRRVARETNPDVVLVEVGGTVGDIESLPFLEAIRQFRKDVGRANVAYVHVTLVPLIKAAGEMKTKPTQHSVKELRSIGIQPDVLVCRCEQPLPRGIKEKISEFCDVPVECVIQAQDAPSIYDVPLVLEQEGLAQRVLEILNLDPQQPDLREWELLVQRLHHPQEQVEIAIVGKYVRLTDAYLSVAEALRHAGLALNAGVTLRWISSEEIEERGPEALLSGVDGVVVPGGFGNRGIEGKVASICYVRERGIPFLGLCLGMQCAVIDWGCHIAQLERANSYEFDPDTPHPVISLLPEQKDVEDLGGTLRLGLYPCRIMPNTLAAKLYGEAIIYERHRHRYEFNNAYRSLFLDSGYVISGVSPDNRLVEIIELPSHPFFIATQFHPEFRSRPNRPHPLFLGLIEAALRSRPQPRPLQLQKMG.

The amidoligase domain stretch occupies residues 1 to 267; that stretch reads MTKFVFVTGG…AQRVLEILNL (267 aa). CTP is bound at residue serine 13. Serine 13 lines the UTP pocket. Position 14–19 (14–19) interacts with ATP; sequence SIGKGI. Tyrosine 54 lines the L-glutamine pocket. Aspartate 71 is a binding site for ATP. Residues aspartate 71 and glutamate 141 each coordinate Mg(2+). CTP contacts are provided by residues 148-150, 188-193, and lysine 224; these read DIE and KTKPTQ. UTP-binding positions include 188 to 193 and lysine 224; that span reads KTKPTQ. The Glutamine amidotransferase type-1 domain occupies 292–534; it reads EIAIVGKYVR…IEAALRSRPQ (243 aa). Glycine 354 provides a ligand contact to L-glutamine. Cysteine 381 serves as the catalytic Nucleophile; for glutamine hydrolysis. L-glutamine is bound by residues 382-385, glutamate 405, and arginine 462; that span reads LGMQ. Residues histidine 507 and glutamate 509 contribute to the active site.

It belongs to the CTP synthase family. As to quaternary structure, homotetramer.

It catalyses the reaction UTP + L-glutamine + ATP + H2O = CTP + L-glutamate + ADP + phosphate + 2 H(+). The catalysed reaction is L-glutamine + H2O = L-glutamate + NH4(+). It carries out the reaction UTP + NH4(+) + ATP = CTP + ADP + phosphate + 2 H(+). Its pathway is pyrimidine metabolism; CTP biosynthesis via de novo pathway; CTP from UDP: step 2/2. With respect to regulation, allosterically activated by GTP, when glutamine is the substrate; GTP has no effect on the reaction when ammonia is the substrate. The allosteric effector GTP functions by stabilizing the protein conformation that binds the tetrahedral intermediate(s) formed during glutamine hydrolysis. Inhibited by the product CTP, via allosteric rather than competitive inhibition. Functionally, catalyzes the ATP-dependent amination of UTP to CTP with either L-glutamine or ammonia as the source of nitrogen. Regulates intracellular CTP levels through interactions with the four ribonucleotide triphosphates. The chain is CTP synthase from Synechococcus sp. (strain JA-2-3B'a(2-13)) (Cyanobacteria bacterium Yellowstone B-Prime).